The following is a 663-amino-acid chain: uncharacterized protein (663 aa).

207–214 (GPPGTGKT) serves as a coordination point for ATP.

Belongs to the DNA2/NAM7 helicase family.

This is an uncharacterized protein from Methanocaldococcus jannaschii (strain ATCC 43067 / DSM 2661 / JAL-1 / JCM 10045 / NBRC 100440) (Methanococcus jannaschii).